Consider the following 321-residue polypeptide: Phosphate acyltransferase (321 aa).

The protein belongs to the PlsX family. In terms of assembly, homodimer. Probably interacts with PlsY.

It localises to the cytoplasm. It carries out the reaction a fatty acyl-[ACP] + phosphate = an acyl phosphate + holo-[ACP]. Its pathway is lipid metabolism; phospholipid metabolism. Catalyzes the reversible formation of acyl-phosphate (acyl-PO(4)) from acyl-[acyl-carrier-protein] (acyl-ACP). This enzyme utilizes acyl-ACP as fatty acyl donor, but not acyl-CoA. This is Phosphate acyltransferase from Chlamydia trachomatis serovar L2 (strain ATCC VR-902B / DSM 19102 / 434/Bu).